Reading from the N-terminus, the 365-residue chain is MPRISEIAASVGLLLLIGVISVDGLVKEGDYQNSLYQQNLESNSATGATASFPFLMPNVSPQTPDLYLCTPIKVDPTTTYYIVGFNPNATMNTAHHMLLYGCGEPGTSKTTWNCGEMNRASQEESASPCGPHSNSQIVYAWARDAQKLNLPEGVGFKVGKNSPIKYLVLQVHYAHIDKFKDGSTDDSGVFLDYTEEPRKKLAGTLLLGTDGQIPAMKTEHLETACEVNEQKVLHPFAYRVHTHGLGKVVSGYRVRTNSDGEQEWLQLGKRDPLTPQMFYNTSNTDPIIEGDKIAVRCTMQSTRHRTTKIGPTNEDEMCNFYLMYYVDHGETLNMKFCFSQGAPYYFWSNPDSGLHNIPHIEASTL.

Positions 1–24 (MPRISEIAASVGLLLLIGVISVDG) are cleaved as a signal peptide. 2 disulfide bridges follow: Cys-69–Cys-114 and Cys-102–Cys-129. Asn-88 carries N-linked (GlcNAc...) asparagine glycosylation. Residues His-95 and His-96 each contribute to the Cu cation site. His-172, His-241, and His-243 together coordinate Cu cation. Asn-280 is a glycosylation site (N-linked (GlcNAc...) asparagine). The cysteines at positions 297 and 318 are disulfide-linked. Met-317 serves as a coordination point for Cu cation.

This sequence belongs to the copper type II ascorbate-dependent monooxygenase family. Cu(2+) is required as a cofactor. In terms of tissue distribution, expressed in the central nervous system (CNS) in a small number of CNS neurons (approximately a few hundred). Expression is present both in cell bodies and within neuropil regions. It is strongly expressed in neuroendocrine neurons (at protein level).

Its subcellular location is the secreted. It catalyses the reaction a [peptide]-C-terminal glycine + 2 L-ascorbate + O2 = a [peptide]-C-terminal (2S)-2-hydroxyglycine + 2 monodehydro-L-ascorbate radical + H2O. In terms of biological role, monooxygenase that catalyzes an essential reaction in C-terminal alpha-amidation of peptides. Produces an unstable peptidyl(2-hydroxyglycine) intermediate. C-terminal amidation of peptides is required for normal developmental transitions and for biosynthesis of secretory peptides throughout the life. The sequence is that of Peptidylglycine alpha-hydroxylating monooxygenase (Phm) from Drosophila melanogaster (Fruit fly).